The following is a 29-amino-acid chain: Galanin (29 aa).

Alanine 29 carries the post-translational modification Alanine amide.

The protein belongs to the galanin family.

The protein resides in the secreted. In terms of biological role, contracts smooth muscle of the gastrointestinal and genitourinary tract, regulates growth hormone release, modulates insulin release, and may be involved in the control of adrenal secretion. The protein is Galanin (GAL) of Ovis aries (Sheep).